The chain runs to 318 residues: Aspartate carbamoyltransferase catalytic subunit (318 aa).

Carbamoyl phosphate is bound by residues R59 and T60. K87 serves as a coordination point for L-aspartate. Carbamoyl phosphate contacts are provided by R109, H137, and Q140. L-aspartate contacts are provided by R170 and R224. 2 residues coordinate carbamoyl phosphate: G265 and P266.

It belongs to the aspartate/ornithine carbamoyltransferase superfamily. ATCase family. As to quaternary structure, heterododecamer (2C3:3R2) of six catalytic PyrB chains organized as two trimers (C3), and six regulatory PyrI chains organized as three dimers (R2).

The catalysed reaction is carbamoyl phosphate + L-aspartate = N-carbamoyl-L-aspartate + phosphate + H(+). The protein operates within pyrimidine metabolism; UMP biosynthesis via de novo pathway; (S)-dihydroorotate from bicarbonate: step 2/3. Catalyzes the condensation of carbamoyl phosphate and aspartate to form carbamoyl aspartate and inorganic phosphate, the committed step in the de novo pyrimidine nucleotide biosynthesis pathway. This chain is Aspartate carbamoyltransferase catalytic subunit, found in Allorhizobium ampelinum (strain ATCC BAA-846 / DSM 112012 / S4) (Agrobacterium vitis (strain S4)).